We begin with the raw amino-acid sequence, 158 residues long: 2-C-methyl-D-erythritol 2,4-cyclodiphosphate synthase (158 aa).

Residues Asp-9 and His-11 each contribute to the a divalent metal cation site. 4-CDP-2-C-methyl-D-erythritol 2-phosphate contacts are provided by residues 9 to 11 (DVH) and 35 to 36 (HS). Position 43 (His-43) interacts with a divalent metal cation. 4-CDP-2-C-methyl-D-erythritol 2-phosphate-binding positions include 57 to 59 (DIG), 62 to 66 (FPDTD), 133 to 136 (TTTE), Phe-140, and Arg-143.

This sequence belongs to the IspF family. Homotrimer. A divalent metal cation is required as a cofactor.

The catalysed reaction is 4-CDP-2-C-methyl-D-erythritol 2-phosphate = 2-C-methyl-D-erythritol 2,4-cyclic diphosphate + CMP. It participates in isoprenoid biosynthesis; isopentenyl diphosphate biosynthesis via DXP pathway; isopentenyl diphosphate from 1-deoxy-D-xylulose 5-phosphate: step 4/6. In terms of biological role, involved in the biosynthesis of isopentenyl diphosphate (IPP) and dimethylallyl diphosphate (DMAPP), two major building blocks of isoprenoid compounds. Catalyzes the conversion of 4-diphosphocytidyl-2-C-methyl-D-erythritol 2-phosphate (CDP-ME2P) to 2-C-methyl-D-erythritol 2,4-cyclodiphosphate (ME-CPP) with a corresponding release of cytidine 5-monophosphate (CMP). In Geobacillus kaustophilus (strain HTA426), this protein is 2-C-methyl-D-erythritol 2,4-cyclodiphosphate synthase.